Reading from the N-terminus, the 271-residue chain is Methylcorrinoid:tetrahydrofolate methyltransferase (271 aa).

The Pterin-binding domain maps to 1–247 (MIIIGEKLNG…GAIFATDALL (247 aa)).

The protein belongs to the vitamin-B12 dependent methionine synthase family. In terms of assembly, the proline betaine:THF methyl transfer system is composed of two methyltransferases, MtpB and MtqA, and the corrinoid protein MtqC. The L-carnitine:THF methyl transfer system is composed of two methyltransferases, MtcB and MtqA, and the corrinoid protein MtqC.

It catalyses the reaction methyl-Co(III)-[quaternary-amine-specific corrinoid protein] + (6S)-5,6,7,8-tetrahydrofolate = Co(I)-[quaternary-amine-specific corrinoid protein] + (6S)-5-methyl-5,6,7,8-tetrahydrofolate + H(+). Involved in the degradation of the quaternary amines L-proline betaine and L-carnitine. Component of a corrinoid-dependent methyltransferase system that transfers a methyl group from L-proline betaine or L-carnitine to tetrahydrofolate (THF), forming methyl-THF, a key intermediate in the Wood-Ljungdahl acetogenesis pathway. MtqA catalyzes the transfer of a methyl group from the methylated corrinoid protein MtqC to THF, forming methyl-THF. This Eubacterium limosum protein is Methylcorrinoid:tetrahydrofolate methyltransferase.